We begin with the raw amino-acid sequence, 338 residues long: Ferrochelatase (338 aa).

Histidine 189 and glutamate 294 together coordinate Fe cation.

The protein belongs to the ferrochelatase family.

It is found in the cytoplasm. It catalyses the reaction heme b + 2 H(+) = protoporphyrin IX + Fe(2+). The protein operates within porphyrin-containing compound metabolism; protoheme biosynthesis; protoheme from protoporphyrin-IX: step 1/1. Functionally, catalyzes the ferrous insertion into protoporphyrin IX. The chain is Ferrochelatase from Pseudomonas putida (strain ATCC 47054 / DSM 6125 / CFBP 8728 / NCIMB 11950 / KT2440).